The primary structure comprises 711 residues: Polyribonucleotide nucleotidyltransferase (711 aa).

2 residues coordinate Mg(2+): D486 and D492. Residues 553 to 612 (PRIHTIKISPDKIKDVIGKGGSVIRALTEETGTTIEIEDDGTVKIAATDGEKAKFAIRRI) form the KH domain. Residues 622-690 (GRIYNGKVTR…RQGRVRLSIK (69 aa)) enclose the S1 motif domain. Positions 690–711 (KEATEQTQPAAAPEAPAAEQGE) are disordered. The span at 694–711 (EQTQPAAAPEAPAAEQGE) shows a compositional bias: low complexity.

The protein belongs to the polyribonucleotide nucleotidyltransferase family. Component of the RNA degradosome, which is a multiprotein complex involved in RNA processing and mRNA degradation. Mg(2+) is required as a cofactor.

The protein localises to the cytoplasm. The enzyme catalyses RNA(n+1) + phosphate = RNA(n) + a ribonucleoside 5'-diphosphate. Its function is as follows. Involved in mRNA degradation. Catalyzes the phosphorolysis of single-stranded polyribonucleotides processively in the 3'- to 5'-direction. The protein is Polyribonucleotide nucleotidyltransferase of Enterobacter sp. (strain 638).